We begin with the raw amino-acid sequence, 129 residues long: Small ribosomal subunit protein uS11 (129 aa).

The protein belongs to the universal ribosomal protein uS11 family. Part of the 30S ribosomal subunit. Interacts with proteins S7 and S18. Binds to IF-3.

Located on the platform of the 30S subunit, it bridges several disparate RNA helices of the 16S rRNA. Forms part of the Shine-Dalgarno cleft in the 70S ribosome. The protein is Small ribosomal subunit protein uS11 of Idiomarina loihiensis (strain ATCC BAA-735 / DSM 15497 / L2-TR).